An 886-amino-acid polypeptide reads, in one-letter code: Alanine--tRNA ligase (886 aa).

The Zn(2+) site is built by H564, H568, C666, and H670.

It belongs to the class-II aminoacyl-tRNA synthetase family. It depends on Zn(2+) as a cofactor.

The protein localises to the cytoplasm. It carries out the reaction tRNA(Ala) + L-alanine + ATP = L-alanyl-tRNA(Ala) + AMP + diphosphate. Its function is as follows. Catalyzes the attachment of alanine to tRNA(Ala) in a two-step reaction: alanine is first activated by ATP to form Ala-AMP and then transferred to the acceptor end of tRNA(Ala). Also edits incorrectly charged Ser-tRNA(Ala) and Gly-tRNA(Ala) via its editing domain. This is Alanine--tRNA ligase from Prochlorococcus marinus subsp. pastoris (strain CCMP1986 / NIES-2087 / MED4).